Reading from the N-terminus, the 683-residue chain is MNVLAKTRVYELAKELDITSRELIDILASEFNITVKNHMSVLDEEDAELIKEIFDDEENSDEKANRSVVADEEIDASNKKVKNKKKEVKKGNKNADNESSEEEIVIEMEDTITVKALADKLKKPTTEVIKQLMFMGVMAAINQELDFNTAEKLAEKFNAVIMQKEDDTITKEIEDEDEGTEKRPPVVTVMGHVDHGKTSILDAIRKAKVTSTEAGGITQHIGAYTVNVNGEKITFLDTPGHEAFTTMRARGAQVTDIVILVVAADDGIMPQTIEAINHCKAAEVPMIVAINKIDKPAANLDRVKQELTEHNLIPEDWGGDVITVPVSAHTKEGLDTLLEMIILTAEMEELKADPERKAKGTVIEAKLDKGRGPVASLLVQNGTLKVGDSIIVGNTYGRIRAMFDDKGKNIKVAGPSIPVEILGLSEVPDAGDRFNVVKDEKTARNMADKRKEKLREKRMQSTNKVSLEDLYNQIQEGKVKELDVIVKADVQGSVEAVIQSLEKLSTDSVKVRVIHGAVGAISETDVTLAAASNAVIIGFNVRPSNNATVLAEKEGVNVRTYRVIYDALDDIKAAMVGMLEPEYKEVVLGSAEVRVVYKISSVGTIAGCYVLNGKITRDSSVRVIRDGIVIFESEISSLKRFKDDAKEVAKGYECGLSVEKFNDIKEGDIIEAFTMEEIKPKNL.

The 170-residue stretch at 182–351 folds into the tr-type G domain; that stretch reads KRPPVVTVMG…ILTAEMEELK (170 aa). Residues 191–198 are G1; that stretch reads GHVDHGKT. Residue 191-198 participates in GTP binding; it reads GHVDHGKT. Residues 216-220 form a G2 region; it reads GITQH. The interval 237–240 is G3; sequence DTPG. Residues 237 to 241 and 291 to 294 each bind GTP; these read DTPGH and NKID. Residues 291–294 form a G4 region; sequence NKID. The segment at 327 to 329 is G5; sequence SAH.

It belongs to the TRAFAC class translation factor GTPase superfamily. Classic translation factor GTPase family. IF-2 subfamily.

Its subcellular location is the cytoplasm. In terms of biological role, one of the essential components for the initiation of protein synthesis. Protects formylmethionyl-tRNA from spontaneous hydrolysis and promotes its binding to the 30S ribosomal subunits. Also involved in the hydrolysis of GTP during the formation of the 70S ribosomal complex. This Clostridium novyi (strain NT) protein is Translation initiation factor IF-2.